Consider the following 935-residue polypeptide: MSDYKDTLNLPKTSFSMKGNLANKEPMILNKWEKQGIYKKIREHFAGREKFVLHDGPPYANGSIHVGHAVNKILKDIIVKSKTLSGYDAPYIPTWDCHGLPIELQVEKKHGKAGQKISEDAFRKECRKYAKQQVEIQKKDFKRLGVLGQWDQPYLTMDFSYEANMIRTLAKIIENKHLTKGFKPVHWCTDCGSALAEAEVEYKDKISPAIDVKFKIKDKEKLAKAFGLESLNHDAFAIIWTTTPWTLPANQAIAVNNQLNYSLVKIEDFYIILAENLVEQTLKRYAIENAQVIANTSGYKLIGIIAEHPFYSRHVPILHGDHVTDDSGTGMVHTAPTHGVEDFTLGKEHDLSMEIFVKGNGCYSENTKLFAGEFVFKANDRVIELLGEKKRLMNFDKLKHSYPHCWRHKTPLIFRATPQWFISMEKEGLREKAIEAIKETSWAPSWGQARIEGMIKDRPDWCISRQRTWGVPLPLFIHKETEELHPNTIEILHKVAQKIEKGGIEAWFNADDNEFIAETDKYKRVKDTLDVWFDSGSSSMCILDIDKSLSYPADLYLEGSDQHRGWFQTSLLVAMSAKGNQPYKEVFTHGFVVDEHGRKMSKSLGNVTSPQDIYNTLGADILRLWTASTDYKSEMAVSDQILKRTADTYRRLRNTARFLLSNLEGFNPETDIIEFDKLVKLDQWAIAKTKEFQDKIIEAYDKYQTHTVAQLIHHFCSIEMGSFYLDIIKDRQYTAKADGHPRKSAQTAIYHIVHALVRWMAPILSYTADEIWEATPKTTDLPIQLCEWYTDLKSFNDQDELNLEFWAKIQEIRSEVNRILEIKRNEEVIKASLEAEIIIYADNDNYKLLEKLGNELRFLLISSKASLRAIEEKTNNSIESNITGLNIEVNKIEEPKCERCWHRSATVGQNEEYQDICSRCVENITTEAGESREFA.

The 'HIGH' region signature appears at 58–68 (PYANGSIHVGH). Glu-558 provides a ligand contact to L-isoleucyl-5'-AMP. The short motif at 599-603 (KMSKS) is the 'KMSKS' region element. Lys-602 provides a ligand contact to ATP. Residues Cys-897, Cys-900, Cys-917, and Cys-920 each contribute to the Zn(2+) site.

The protein belongs to the class-I aminoacyl-tRNA synthetase family. IleS type 1 subfamily. Monomer. It depends on Zn(2+) as a cofactor.

The protein localises to the cytoplasm. It catalyses the reaction tRNA(Ile) + L-isoleucine + ATP = L-isoleucyl-tRNA(Ile) + AMP + diphosphate. Catalyzes the attachment of isoleucine to tRNA(Ile). As IleRS can inadvertently accommodate and process structurally similar amino acids such as valine, to avoid such errors it has two additional distinct tRNA(Ile)-dependent editing activities. One activity is designated as 'pretransfer' editing and involves the hydrolysis of activated Val-AMP. The other activity is designated 'posttransfer' editing and involves deacylation of mischarged Val-tRNA(Ile). This Francisella philomiragia subsp. philomiragia (strain ATCC 25017 / CCUG 19701 / FSC 153 / O#319-036) protein is Isoleucine--tRNA ligase.